Reading from the N-terminus, the 232-residue chain is Thrombin-like enzyme bothrombin (232 aa).

Positions 1-223 (VIGGDECDIN…YLPWIQSIIA (223 aa)) constitute a Peptidase S1 domain. Cystine bridges form between cysteine 7-cysteine 139, cysteine 26-cysteine 42, cysteine 74-cysteine 230, cysteine 118-cysteine 184, cysteine 150-cysteine 163, and cysteine 174-cysteine 199. Active-site charge relay system residues include histidine 41 and aspartate 86. Residues asparagine 98 and asparagine 146 are each glycosylated (N-linked (GlcNAc...) asparagine). The Charge relay system role is filled by serine 178. An N-linked (GlcNAc...) asparagine glycan is attached at asparagine 225.

This sequence belongs to the peptidase S1 family. Snake venom subfamily. Monomer. In terms of tissue distribution, expressed by the venom gland.

The protein localises to the secreted. It catalyses the reaction Selective cleavage of Arg-|-Xaa bond in fibrinogen, to form fibrin, and release fibrinopeptide A. The specificity of further degradation of fibrinogen varies with species origin of the enzyme.. Its activity is regulated as follows. Inhibited by diisopropylfluorophosphate (DFP), but not by hirudin. Its function is as follows. Thrombin-like snake venom serine protease that clots fibrinogen by releasing fibrinopeptide A from the alpha chain of fibrinogen (FGA), induces platelet aggregation through its interaction with GPIb (GP1BA/GP1BB), and activates factor VIII (F8). This chain is Thrombin-like enzyme bothrombin, found in Bothrops jararaca (Jararaca).